A 381-amino-acid polypeptide reads, in one-letter code: Peptidoglycan glycosyltransferase MrdB (381 aa).

The next 10 helical transmembrane spans lie at 11–31 (FDLLPFVFIIPLLVVSFLLIF), 40–60 (KQGVYYAIGFLLFWVVFFIPF), 66–86 (WLFALYWACVILLALVDFMGS), 102–122 (ITLQPSEPVKIAILLLLAHLI), 132–152 (YDWGMFLKLSFYICLPAALIL), 156–176 (DLGTALIVLIMGFGILLIVGL), 180–200 (VWLPLLIALIVASPIAYHFLH), 263–283 (FGFLGAILLFAIYIGLSLHLF), 297–317 (IVALGISILIFVYSSVNIAMT), and 328–348 (LPLFSYGGSSFITFMILFAIL).

This sequence belongs to the SEDS family. MrdB/RodA subfamily.

The protein resides in the cell inner membrane. It carries out the reaction [GlcNAc-(1-&gt;4)-Mur2Ac(oyl-L-Ala-gamma-D-Glu-L-Lys-D-Ala-D-Ala)](n)-di-trans,octa-cis-undecaprenyl diphosphate + beta-D-GlcNAc-(1-&gt;4)-Mur2Ac(oyl-L-Ala-gamma-D-Glu-L-Lys-D-Ala-D-Ala)-di-trans,octa-cis-undecaprenyl diphosphate = [GlcNAc-(1-&gt;4)-Mur2Ac(oyl-L-Ala-gamma-D-Glu-L-Lys-D-Ala-D-Ala)](n+1)-di-trans,octa-cis-undecaprenyl diphosphate + di-trans,octa-cis-undecaprenyl diphosphate + H(+). It functions in the pathway cell wall biogenesis; peptidoglycan biosynthesis. Its function is as follows. Peptidoglycan polymerase that is essential for cell wall elongation. This Helicobacter pylori (strain J99 / ATCC 700824) (Campylobacter pylori J99) protein is Peptidoglycan glycosyltransferase MrdB.